A 360-amino-acid polypeptide reads, in one-letter code: Squamosa promoter-binding-like protein 7 (360 aa).

Over residues 74 to 89 (AQGSGGGGGGGGGGSA) the composition is skewed to gly residues. The disordered stretch occupies residues 74–98 (AQGSGGGGGGGGGGSADQGKRKEKA). The SBP-type zinc-finger motif lies at 105 to 182 (VPRCQVEGCD…AGHNERRRRS (78 aa)). Cys-108, Cys-113, Cys-130, His-133, Cys-149, Cys-152, His-156, and Cys-168 together coordinate Zn(2+). A Bipartite nuclear localization signal motif is present at residues 165 to 181 (KKSCRRRLAGHNERRRR). A compositionally biased stretch (basic residues) spans 172–182 (LAGHNERRRRS). Disordered regions lie at residues 172-196 (LAGH…AHPH), 261-306 (FFSD…HEHQ), and 320-360 (AAGG…ARVV).

In terms of tissue distribution, expressed in young panicles.

It is found in the nucleus. In terms of biological role, trans-acting factor that binds specifically to the consensus nucleotide sequence 5'-TNCGTACAA-3'. May be involved in panicle development. In Oryza sativa subsp. indica (Rice), this protein is Squamosa promoter-binding-like protein 7 (SPL7).